The chain runs to 362 residues: Probable dual-specificity RNA methyltransferase RlmN (362 aa).

Glu105 functions as the Proton acceptor in the catalytic mechanism. Residues 111-344 (HEYGNSICVT…VTIRREQGHD (234 aa)) enclose the Radical SAM core domain. Cys118 and Cys349 are oxidised to a cystine. 3 residues coordinate [4Fe-4S] cluster: Cys125, Cys129, and Cys132. Residues 175-176 (GE), Ser207, 230-232 (SLH), and Asn306 contribute to the S-adenosyl-L-methionine site. The active-site S-methylcysteine intermediate is Cys349.

This sequence belongs to the radical SAM superfamily. RlmN family. It depends on [4Fe-4S] cluster as a cofactor.

The protein resides in the cytoplasm. It carries out the reaction adenosine(2503) in 23S rRNA + 2 reduced [2Fe-2S]-[ferredoxin] + 2 S-adenosyl-L-methionine = 2-methyladenosine(2503) in 23S rRNA + 5'-deoxyadenosine + L-methionine + 2 oxidized [2Fe-2S]-[ferredoxin] + S-adenosyl-L-homocysteine. The enzyme catalyses adenosine(37) in tRNA + 2 reduced [2Fe-2S]-[ferredoxin] + 2 S-adenosyl-L-methionine = 2-methyladenosine(37) in tRNA + 5'-deoxyadenosine + L-methionine + 2 oxidized [2Fe-2S]-[ferredoxin] + S-adenosyl-L-homocysteine. Its function is as follows. Specifically methylates position 2 of adenine 2503 in 23S rRNA and position 2 of adenine 37 in tRNAs. The protein is Probable dual-specificity RNA methyltransferase RlmN of Bacillus cereus (strain G9842).